Consider the following 153-residue polypeptide: Ribonuclease P protein component (153 aa).

This sequence belongs to the RnpA family. Consists of a catalytic RNA component (M1 or rnpB) and a protein subunit.

It carries out the reaction Endonucleolytic cleavage of RNA, removing 5'-extranucleotides from tRNA precursor.. Its function is as follows. RNaseP catalyzes the removal of the 5'-leader sequence from pre-tRNA to produce the mature 5'-terminus. It can also cleave other RNA substrates such as 4.5S RNA. The protein component plays an auxiliary but essential role in vivo by binding to the 5'-leader sequence and broadening the substrate specificity of the ribozyme. The chain is Ribonuclease P protein component from Helicobacter acinonychis (strain Sheeba).